The chain runs to 59 residues: Large ribosomal subunit protein bL32 (59 aa).

The span at 1–15 (MAVPKRKTSKSKRDM) shows a compositional bias: basic residues. Positions 1 to 21 (MAVPKRKTSKSKRDMRRASNS) are disordered.

It belongs to the bacterial ribosomal protein bL32 family.

The chain is Large ribosomal subunit protein bL32 from Alkaliphilus metalliredigens (strain QYMF).